The chain runs to 176 residues: NAD(P)H-quinone oxidoreductase subunit J (176 aa).

This sequence belongs to the complex I 30 kDa subunit family. NDH-1 can be composed of about 15 different subunits; different subcomplexes with different compositions have been identified which probably have different functions.

The protein resides in the cell inner membrane. It carries out the reaction a plastoquinone + NADH + (n+1) H(+)(in) = a plastoquinol + NAD(+) + n H(+)(out). The enzyme catalyses a plastoquinone + NADPH + (n+1) H(+)(in) = a plastoquinol + NADP(+) + n H(+)(out). NDH-1 shuttles electrons from an unknown electron donor, via FMN and iron-sulfur (Fe-S) centers, to quinones in the respiratory and/or the photosynthetic chain. The immediate electron acceptor for the enzyme in this species is believed to be plastoquinone. Couples the redox reaction to proton translocation, and thus conserves the redox energy in a proton gradient. Cyanobacterial NDH-1 also plays a role in inorganic carbon-concentration. The sequence is that of NAD(P)H-quinone oxidoreductase subunit J from Gloeobacter violaceus (strain ATCC 29082 / PCC 7421).